We begin with the raw amino-acid sequence, 251 residues long: Putative imidazole glycerol phosphate synthase subunit hisF2 (251 aa).

Asp130 is an active-site residue.

This sequence belongs to the HisA/HisF family. In terms of assembly, heterodimer of HisH and HisF.

The protein resides in the cytoplasm. The enzyme catalyses 5-[(5-phospho-1-deoxy-D-ribulos-1-ylimino)methylamino]-1-(5-phospho-beta-D-ribosyl)imidazole-4-carboxamide + L-glutamine = D-erythro-1-(imidazol-4-yl)glycerol 3-phosphate + 5-amino-1-(5-phospho-beta-D-ribosyl)imidazole-4-carboxamide + L-glutamate + H(+). It functions in the pathway amino-acid biosynthesis; L-histidine biosynthesis; L-histidine from 5-phospho-alpha-D-ribose 1-diphosphate: step 5/9. Functionally, IGPS catalyzes the conversion of PRFAR and glutamine to IGP, AICAR and glutamate. The HisF subunit catalyzes the cyclization activity that produces IGP and AICAR from PRFAR using the ammonia provided by the HisH subunit. This chain is Putative imidazole glycerol phosphate synthase subunit hisF2 (hisF2), found in Pseudomonas aeruginosa (strain ATCC 15692 / DSM 22644 / CIP 104116 / JCM 14847 / LMG 12228 / 1C / PRS 101 / PAO1).